A 260-amino-acid polypeptide reads, in one-letter code: 14-3-3 protein 4 (260 aa).

Positions Asp238–Gln260 are disordered. Positions Asp245 to Gln260 are enriched in basic and acidic residues.

This sequence belongs to the 14-3-3 family. In terms of assembly, homodimer.

This is 14-3-3 protein 4 (TFT4) from Solanum lycopersicum (Tomato).